Reading from the N-terminus, the 115-residue chain is NAD(P)H-quinone oxidoreductase subunit M (115 aa).

This sequence belongs to the complex I NdhM subunit family. NDH-1 can be composed of about 15 different subunits; different subcomplexes with different compositions have been identified which probably have different functions.

The protein localises to the cellular thylakoid membrane. It carries out the reaction a plastoquinone + NADH + (n+1) H(+)(in) = a plastoquinol + NAD(+) + n H(+)(out). The enzyme catalyses a plastoquinone + NADPH + (n+1) H(+)(in) = a plastoquinol + NADP(+) + n H(+)(out). In terms of biological role, NDH-1 shuttles electrons from an unknown electron donor, via FMN and iron-sulfur (Fe-S) centers, to quinones in the respiratory and/or the photosynthetic chain. The immediate electron acceptor for the enzyme in this species is believed to be plastoquinone. Couples the redox reaction to proton translocation, and thus conserves the redox energy in a proton gradient. Cyanobacterial NDH-1 also plays a role in inorganic carbon-concentration. This chain is NAD(P)H-quinone oxidoreductase subunit M, found in Synechococcus sp. (strain CC9902).